A 525-amino-acid chain; its full sequence is Acetyl-CoA hydrolase (525 aa).

280–284 (GIGNI) is a binding site for CoA. E305 acts as the 5-glutamyl coenzyme A thioester intermediate in catalysis. CoA is bound by residues N395 and G399.

This sequence belongs to the acetyl-CoA hydrolase/transferase family.

It localises to the cytoplasm. It carries out the reaction acetyl-CoA + H2O = acetate + CoA + H(+). Required for utilization of acetate. The sequence is that of Acetyl-CoA hydrolase (acu-8) from Neurospora crassa (strain ATCC 24698 / 74-OR23-1A / CBS 708.71 / DSM 1257 / FGSC 987).